The following is a 104-amino-acid chain: uncharacterized protein (104 aa).

Disordered regions lie at residues 1–48 and 66–104; these read MLRR…NNQP and QENT…RRCS.

This is an uncharacterized protein from Saccharomyces cerevisiae (strain ATCC 204508 / S288c) (Baker's yeast).